Here is a 344-residue protein sequence, read N- to C-terminus: Anthranilate phosphoribosyltransferase (344 aa).

5-phospho-alpha-D-ribose 1-diphosphate is bound by residues glycine 84, glycine 87–aspartate 88, serine 92, asparagine 94–threonine 97, lysine 112–glycine 120, and serine 124. Position 84 (glycine 84) interacts with anthranilate. Residue serine 96 coordinates Mg(2+). Asparagine 115 contributes to the anthranilate binding site. Arginine 170 is an anthranilate binding site. The Mg(2+) site is built by aspartate 229 and glutamate 230.

This sequence belongs to the anthranilate phosphoribosyltransferase family. Homodimer. Mg(2+) serves as cofactor.

The enzyme catalyses N-(5-phospho-beta-D-ribosyl)anthranilate + diphosphate = 5-phospho-alpha-D-ribose 1-diphosphate + anthranilate. It functions in the pathway amino-acid biosynthesis; L-tryptophan biosynthesis; L-tryptophan from chorismate: step 2/5. Functionally, catalyzes the transfer of the phosphoribosyl group of 5-phosphorylribose-1-pyrophosphate (PRPP) to anthranilate to yield N-(5'-phosphoribosyl)-anthranilate (PRA). This is Anthranilate phosphoribosyltransferase from Synechococcus sp. (strain RCC307).